The sequence spans 423 residues: Protein CLP1 homolog (423 aa).

ATP contacts are provided by residues Glu16, Lys57, and 119–124 (DVGKST).

Belongs to the Clp1 family. Clp1 subfamily.

It is found in the nucleus. In terms of biological role, required for endonucleolytic cleavage during polyadenylation-dependent pre-mRNA 3'-end formation. The polypeptide is Protein CLP1 homolog (cbc) (Drosophila melanogaster (Fruit fly)).